A 554-amino-acid polypeptide reads, in one-letter code: 3-(3-hydroxy-phenyl)propionate/3-hydroxycinnamic acid hydroxylase (554 aa).

FAD is bound by residues 17–46 (QVAI…VVEK) and 285–295 (FRIDRVLLAGD).

It belongs to the PheA/TfdB FAD monooxygenase family. It depends on FAD as a cofactor.

The catalysed reaction is 3-(3-hydroxyphenyl)propanoate + NADH + O2 + H(+) = 3-(2,3-dihydroxyphenyl)propanoate + NAD(+) + H2O. The enzyme catalyses (2E)-3-(3-hydroxyphenyl)prop-2-enoate + NADH + O2 + H(+) = (2E)-3-(2,3-dihydroxyphenyl)prop-2-enoate + NAD(+) + H2O. The protein operates within aromatic compound metabolism; 3-phenylpropanoate degradation. Catalyzes the insertion of one atom of molecular oxygen into position 2 of the phenyl ring of 3-(3-hydroxyphenyl)propionate (3-HPP) and hydroxycinnamic acid (3HCI). The polypeptide is 3-(3-hydroxy-phenyl)propionate/3-hydroxycinnamic acid hydroxylase (Escherichia coli O8 (strain IAI1)).